A 92-amino-acid chain; its full sequence is MSGITRDSRPALRAGVRLQQDRARDQWVLLAPERVVELDDIALVVAQRYDGTRSLAQIAQELAAEFDADAAQIEADVIELTDTLHQKRLLRL.

Belongs to the PqqD family. As to quaternary structure, monomer. Interacts with PqqE.

It functions in the pathway cofactor biosynthesis; pyrroloquinoline quinone biosynthesis. Functions as a PqqA binding protein and presents PqqA to PqqE, in the pyrroloquinoline quinone (PQQ) biosynthetic pathway. In Xanthomonas axonopodis pv. citri (strain 306), this protein is PqqA binding protein.